We begin with the raw amino-acid sequence, 447 residues long: Tubulin beta-4 chain (447 aa).

The GTP site is built by Gln11, Glu69, Ser138, Gly142, Thr143, Gly144, Asn204, and Asn226. Residue Glu69 coordinates Mg(2+). Residues 423–447 (QQYQDATADEEGEYEDEEQQEADDM) are disordered. Over residues 429-447 (TADEEGEYEDEEQQEADDM) the composition is skewed to acidic residues.

The protein belongs to the tubulin family. As to quaternary structure, dimer of alpha and beta chains. A typical microtubule is a hollow water-filled tube with an outer diameter of 25 nm and an inner diameter of 15 nM. Alpha-beta heterodimers associate head-to-tail to form protofilaments running lengthwise along the microtubule wall with the beta-tubulin subunit facing the microtubule plus end conferring a structural polarity. Microtubules usually have 13 protofilaments but different protofilament numbers can be found in some organisms and specialized cells. Mg(2+) serves as cofactor. Expressed in roots and leaf sheaths.

Its subcellular location is the cytoplasm. It localises to the cytoskeleton. Functionally, tubulin is the major constituent of microtubules, a cylinder consisting of laterally associated linear protofilaments composed of alpha- and beta-tubulin heterodimers. Microtubules grow by the addition of GTP-tubulin dimers to the microtubule end, where a stabilizing cap forms. Below the cap, tubulin dimers are in GDP-bound state, owing to GTPase activity of alpha-tubulin. The protein is Tubulin beta-4 chain (TUBB4) of Oryza sativa subsp. japonica (Rice).